We begin with the raw amino-acid sequence, 142 residues long: Large ribosomal subunit protein uL13 (142 aa).

This sequence belongs to the universal ribosomal protein uL13 family. In terms of assembly, part of the 50S ribosomal subunit.

Functionally, this protein is one of the early assembly proteins of the 50S ribosomal subunit, although it is not seen to bind rRNA by itself. It is important during the early stages of 50S assembly. The protein is Large ribosomal subunit protein uL13 of Coxiella burnetii (strain CbuK_Q154) (Coxiella burnetii (strain Q154)).